We begin with the raw amino-acid sequence, 460 residues long: MFS-type transporter PUL3 (460 aa).

Helical transmembrane passes span 16–36 (AVTL…SSVV), 50–70 (YLFI…FIIG), 81–101 (WVII…SCAG), 113–133 (IICG…TAIS), 151–171 (GICM…DFTV), 181–201 (APTF…MFVL), 240–260 (MFLS…FLTL), and 271–291 (VAFM…PDLV). The segment at 300–323 (PSTQDETDTSDNDKIEKEESEQKS) is disordered. Over residues 310–323 (DNDKIEKEESEQKS) the composition is skewed to basic and acidic residues. A run of 4 helical transmembrane segments spans residues 333-353 (VSLT…MIGA), 369-389 (IFFT…GSSV), 408-428 (FIGA…AALY), and 433-453 (GLPI…PSLV).

Belongs to the major facilitator superfamily. TCR/Tet family.

Its subcellular location is the cell membrane. Functionally, MFS-type transporer required for the uptake of iron via the uptake of the siderophore pulcherrimin-iron complex. The polypeptide is MFS-type transporter PUL3 (Kluyveromyces lactis (strain ATCC 8585 / CBS 2359 / DSM 70799 / NBRC 1267 / NRRL Y-1140 / WM37) (Yeast)).